Here is a 482-residue protein sequence, read N- to C-terminus: tRNA sulfurtransferase (482 aa).

One can recognise a THUMP domain in the interval 61–165 (LAIRDALTRI…DDRLLLIKGR (105 aa)). Residues 183–184 (LI), K265, G287, and Q296 contribute to the ATP site. C344 and C456 form a disulfide bridge. The Rhodanese domain occupies 404 to 482 (FGPNDVILDI…GFNNVKVYRP (79 aa)). C456 (cysteine persulfide intermediate) is an active-site residue.

The protein belongs to the ThiI family.

It is found in the cytoplasm. The enzyme catalyses [ThiI sulfur-carrier protein]-S-sulfanyl-L-cysteine + a uridine in tRNA + 2 reduced [2Fe-2S]-[ferredoxin] + ATP + H(+) = [ThiI sulfur-carrier protein]-L-cysteine + a 4-thiouridine in tRNA + 2 oxidized [2Fe-2S]-[ferredoxin] + AMP + diphosphate. The catalysed reaction is [ThiS sulfur-carrier protein]-C-terminal Gly-Gly-AMP + S-sulfanyl-L-cysteinyl-[cysteine desulfurase] + AH2 = [ThiS sulfur-carrier protein]-C-terminal-Gly-aminoethanethioate + L-cysteinyl-[cysteine desulfurase] + A + AMP + 2 H(+). Its pathway is cofactor biosynthesis; thiamine diphosphate biosynthesis. In terms of biological role, catalyzes the ATP-dependent transfer of a sulfur to tRNA to produce 4-thiouridine in position 8 of tRNAs, which functions as a near-UV photosensor. Also catalyzes the transfer of sulfur to the sulfur carrier protein ThiS, forming ThiS-thiocarboxylate. This is a step in the synthesis of thiazole, in the thiamine biosynthesis pathway. The sulfur is donated as persulfide by IscS. The chain is tRNA sulfurtransferase from Escherichia coli O8 (strain IAI1).